The following is a 166-amino-acid chain: Protein BioX (166 aa).

Transmembrane regions (helical) follow at residues 12–32 (ISLL…TGIP), 33–53 (GSEF…FGFK), 55–75 (YFLA…HSIL), 87–107 (VGLI…AGPI), and 117–137 (AFTL…GMVI).

Its subcellular location is the cell membrane. In terms of biological role, does not seem to be a permease of pimelate. Its role in biotin synthesis is not clear. The chain is Protein BioX (bioX) from Lysinibacillus sphaericus (Bacillus sphaericus).